A 288-amino-acid chain; its full sequence is Ankyrin repeat and SOCS box protein 8 (288 aa).

Ser-17 carries the post-translational modification Phosphoserine. 4 ANK repeats span residues 52–81 (GTLKPLHCACMVSDADCVELLLEKGAEVNA), 85–113 (YNRTALHYAAEKDEACVEVLLEYGANPNA), 117–146 (NRDTPLHWAAFKNNAECVRALLESGASVNA), and 150–179 (NNDTPLSWAAMKGNLESVSILLDYGAEVRV). Residues 235 to 288 (QLCEKLTVLCSAPGTLKTLARYAVRRSLGLQYLPDAVKGLPLPASLKEYLLLLE) enclose the SOCS box domain.

It belongs to the ankyrin SOCS box (ASB) family. As to quaternary structure, interacts with TBK1; this interaction promotes TBK1 proteasomal degradation. Post-translationally, phosphorylated by TBK1. As to expression, highest level of expression in skeletal muscle. Also expressed in heart, brain, placenta, liver, kidney and pancreas.

It localises to the cytoplasm. Its pathway is protein modification; protein ubiquitination. Functionally, may be a substrate-recognition component of a SCF-like ECS (Elongin-Cullin-SOCS-box protein) E3 ubiquitin-protein ligase complex which mediates the ubiquitination and subsequent proteasomal degradation of target proteins. Inhibits IFN-beta production through the IRF3 signaling pathway by targeting TBK1 via 'Lys-48'-linked ubiquitination, leading to its proteasomal degradation. The sequence is that of Ankyrin repeat and SOCS box protein 8 (ASB8) from Homo sapiens (Human).